We begin with the raw amino-acid sequence, 341 residues long: UDP-3-O-acylglucosamine N-acyltransferase (341 aa).

The active-site Proton acceptor is His-242.

The protein belongs to the transferase hexapeptide repeat family. LpxD subfamily. As to quaternary structure, homotrimer.

It carries out the reaction a UDP-3-O-[(3R)-3-hydroxyacyl]-alpha-D-glucosamine + a (3R)-hydroxyacyl-[ACP] = a UDP-2-N,3-O-bis[(3R)-3-hydroxyacyl]-alpha-D-glucosamine + holo-[ACP] + H(+). The protein operates within bacterial outer membrane biogenesis; LPS lipid A biosynthesis. Catalyzes the N-acylation of UDP-3-O-acylglucosamine using 3-hydroxyacyl-ACP as the acyl donor. Is involved in the biosynthesis of lipid A, a phosphorylated glycolipid that anchors the lipopolysaccharide to the outer membrane of the cell. This is UDP-3-O-acylglucosamine N-acyltransferase from Haemophilus influenzae (strain ATCC 51907 / DSM 11121 / KW20 / Rd).